Here is a 75-residue protein sequence, read N- to C-terminus: Serine rich endogenous peptide 4 (75 aa).

An N-terminal signal peptide occupies residues 1–31 (MATKTSNLGHLLLSLFILLLFILSQVGVAQA). Positions 51-75 (PPPLRGIVKPPIASFHSASPKDKGP) are disordered. Positions 61 to 75 (PIASFHSASPKDKGP) match the SCOOP motif motif. Residues 67–69 (SAS) carry the SxS motif essential for MIK2 binding motif.

Belongs to the serine rich endogenous peptide (SCOOP) phytocytokine family. Interacts with MIK2 (via extracellular leucine-rich repeat domain); this interaction triggers the formation of complex between MIK2 and the BAK1/SERK3 and SERK4 coreceptors, and subsequent BAK1 activation by phosphorylation. In terms of tissue distribution, mostly expressed in leaves and seedlings shoots, and, to a lower extent, in roots, stems, siliques, seeds and flowers.

Its subcellular location is the cell membrane. The protein resides in the secreted. The protein localises to the extracellular space. It localises to the apoplast. Functionally, brassicaceae-specific phytocytokine (plant endogenous peptide released into the apoplast) perceived by MIK2 in a BAK1/SERK3 and SERK4 coreceptors-dependent manner, that modulates various physiological and antimicrobial processes including growth prevention and reactive oxygen species (ROS) response regulation. Inhibits root growth. Prevents general growth and development. Exhibits antibacterial effects against Pseudomonas syringae pv. tomato DC3000, Ralstonia solanacearum, Bacillus subtilis and Agrobacterium tumefaciens, thus being an antimicrobial peptide (AMP). This is Serine rich endogenous peptide 4 from Arabidopsis thaliana (Mouse-ear cress).